Here is a 101-residue protein sequence, read N- to C-terminus: Apolipoprotein C-II (101 aa).

The signal sequence occupies residues 1 to 17 (MGTRFLLALCLVLLVLG). Residues 66–74 (AVDEKLRDL) form a lipid binding region. Residues 78–101 (STAAMSTYTGIFTDQVLSVLKGEE) are lipoprotein lipase cofactor.

It belongs to the apolipoprotein C2 family. Proapolipoprotein C-II is synthesized as a sialic acid containing glycoprotein which is subsequently desialylated prior to its proteolytic processing. In terms of processing, proapolipoprotein C-II, the major form found in plasma undergoes proteolytic cleavage of its N-terminal hexapeptide to generate apolipoprotein C-II, which occurs as the minor form in plasma.

The protein localises to the secreted. Component of chylomicrons, very low-density lipoproteins (VLDL), low-density lipoproteins (LDL), and high-density lipoproteins (HDL) in plasma. Plays an important role in lipoprotein metabolism as an activator of lipoprotein lipase. Both proapolipoprotein C-II and apolipoprotein C-II can activate lipoprotein lipase. This is Apolipoprotein C-II (APOC2) from Chlorocebus sabaeus (Green monkey).